The sequence spans 303 residues: Bidirectional sugar transporter SWEET14 (303 aa).

Over Met-1–Pro-9 the chain is Extracellular. The chain crosses the membrane as a helical span at residues Trp-10–Leu-30. The MtN3/slv 1 domain occupies Ala-13 to Lys-98. Topologically, residues Pro-31 to Gly-44 are cytoplasmic. A helical transmembrane segment spans residues Phe-45–Leu-65. The Extracellular portion of the chain corresponds to Leu-66–Leu-72. The chain crosses the membrane as a helical span at residues Leu-73–Val-93. Over Tyr-94–Lys-105 the chain is Cytoplasmic. A helical transmembrane segment spans residues Leu-106–Ser-126. The Extracellular segment spans residues Ala-127–Val-133. A helical membrane pass occupies residues Val-134–Ile-154. Residues Val-134–Ser-217 form the MtN3/slv 2 domain. The Cytoplasmic segment spans residues Arg-155–Pro-167. The helical transmembrane segment at Phe-168 to Ile-188 threads the bilayer. Residues Lys-189–Tyr-192 lie on the Extracellular side of the membrane. Residues Val-193–Met-213 traverse the membrane as a helical segment. Topologically, residues Tyr-214–Ala-303 are cytoplasmic. Positions His-266 to Ala-290 are disordered.

This sequence belongs to the SWEET sugar transporter family. Forms homooligomers and/or heterooligomers.

The protein resides in the cell membrane. Functionally, mediates both low-affinity uptake and efflux of sugar across the plasma membrane. In terms of biological role, confers blight susceptibility. Confers TAL effector-mediated susceptibility to Xanthomonas oryzae pv. oryzae. This chain is Bidirectional sugar transporter SWEET14 (SWEET14), found in Oryza sativa subsp. japonica (Rice).